A 404-amino-acid chain; its full sequence is Translation initiation factor eIF2B subunit gamma (404 aa).

This sequence belongs to the eIF-2B gamma/epsilon subunits family. Component of the translation initiation factor 2B (eIF2B) complex which is a heterodecamer of two sets of five different subunits: alpha, beta, gamma, delta and epsilon. Subunits alpha, beta and delta comprise a regulatory subcomplex and subunits epsilon and gamma comprise a catalytic subcomplex. Within the complex, the hexameric regulatory complex resides at the center, with the two heterodimeric catalytic subcomplexes bound on opposite sides.

Its subcellular location is the cytoplasm. It localises to the cytosol. In terms of biological role, acts as a component of the translation initiation factor 2B (eIF2B) complex, which catalyzes the exchange of GDP for GTP on the eukaryotic initiation factor 2 (eIF2) complex gamma subunit. Its guanine nucleotide exchange factor activity is repressed when bound to eIF2 complex phosphorylated on the alpha subunit, thereby limiting the amount of methionyl-initiator methionine tRNA available to the ribosome and consequently global translation is repressed. The protein is Translation initiation factor eIF2B subunit gamma of Caenorhabditis elegans.